Reading from the N-terminus, the 386-residue chain is Glucose-1-phosphate adenylyltransferase (386 aa).

Residues tyrosine 100, glycine 165, 180–181 (EK), and serine 191 contribute to the alpha-D-glucose 1-phosphate site.

This sequence belongs to the bacterial/plant glucose-1-phosphate adenylyltransferase family. As to quaternary structure, homotetramer.

The enzyme catalyses alpha-D-glucose 1-phosphate + ATP + H(+) = ADP-alpha-D-glucose + diphosphate. It functions in the pathway glycan biosynthesis; glycogen biosynthesis. Involved in the biosynthesis of ADP-glucose, a building block required for the elongation reactions to produce glycogen. Catalyzes the reaction between ATP and alpha-D-glucose 1-phosphate (G1P) to produce pyrophosphate and ADP-Glc. This Clostridium botulinum (strain Eklund 17B / Type B) protein is Glucose-1-phosphate adenylyltransferase.